A 460-amino-acid polypeptide reads, in one-letter code: Orexin receptor type 2 (460 aa).

The Extracellular portion of the chain corresponds to 1–54; that stretch reads MSSTKLEDSLSRRNWSSASELNETQEPFLNPTDYDDEEFLRYLWREYLHPKEYE. Asn14 and Asn22 each carry an N-linked (GlcNAc...) asparagine glycan. Positions 33–49 are required for response to orexin-A; sequence DYDDEEFLRYLWREYLH. A helical transmembrane segment spans residues 55–75; that stretch reads WVLIAGYIIVFVVALIGNVLV. Residues 76 to 88 are Cytoplasmic-facing; the sequence is CVAVWKNHHMRTV. The helical transmembrane segment at 89 to 110 threads the bilayer; that stretch reads TNYFIVNLSLADVLVTITCLPA. Topologically, residues 111 to 127 are extracellular; sequence TLVVDITETWFFGQSLC. Residues Cys127 and Cys210 are joined by a disulfide bond. The helical transmembrane segment at 128–150 threads the bilayer; the sequence is KVIPYLQTVSVSVSVLTLSCIAL. The Cytoplasmic portion of the chain corresponds to 151 to 170; it reads DRWYAICHPLMFKSTAKRAR. A helical transmembrane segment spans residues 171–191; it reads NSIVVIWIVSCIIMIPQAIVM. At 192 to 222 the chain is on the extracellular side; it reads ECSSMLPGLANKTTLFTVCDEHWGGEVYPKM. Asn202 carries N-linked (GlcNAc...) asparagine glycosylation. Residues 223–243 traverse the membrane as a helical segment; sequence YHICFFLVTYMAPLCLMILAY. Over 244–304 the chain is Cytoplasmic; that stretch reads LQIFRKLWCR…QIRARRKTAR (61 aa). A helical membrane pass occupies residues 305 to 326; sequence MLMVVLLVFAICYLPISILNVL. Residues 327 to 342 lie on the Extracellular side of the membrane; that stretch reads KRVFGMFTHTEDRETV. A helical transmembrane segment spans residues 343–366; that stretch reads YAWFTFSHWLVYANSAANPIIYNF. At 367–460 the chain is on the cytoplasmic side; that stretch reads LSGKFREEFK…SSLLSTWLEV (94 aa).

Belongs to the G-protein coupled receptor 1 family. In terms of tissue distribution, widely expressed. Isoform 2 not detected in skeletal muscle and kidney.

It is found in the cell membrane. Nonselective, high-affinity receptor for both orexin-A and orexin-B neuropeptides. Triggers an increase in cytoplasmic Ca(2+) levels in response to orexin-A binding. The protein is Orexin receptor type 2 (Hcrtr2) of Mus musculus (Mouse).